The sequence spans 288 residues: ATP synthase gamma chain (288 aa).

The protein belongs to the ATPase gamma chain family. As to quaternary structure, F-type ATPases have 2 components, CF(1) - the catalytic core - and CF(0) - the membrane proton channel. CF(1) has five subunits: alpha(3), beta(3), gamma(1), delta(1), epsilon(1). CF(0) has three main subunits: a, b and c.

It localises to the cell membrane. Produces ATP from ADP in the presence of a proton gradient across the membrane. The gamma chain is believed to be important in regulating ATPase activity and the flow of protons through the CF(0) complex. This Staphylococcus saprophyticus subsp. saprophyticus (strain ATCC 15305 / DSM 20229 / NCIMB 8711 / NCTC 7292 / S-41) protein is ATP synthase gamma chain.